Consider the following 535-residue polypeptide: Probable histone-arginine methyltransferase 1.3 (535 aa).

M1 is modified (N-acetylmethionine). The region spanning 141–456 is the SAM-dependent MTase PRMT-type domain; that stretch reads EASSAKMYFH…QSYTIDLTLS (316 aa). Residues Q158, R167, G191, E213, and E243 each contribute to the S-adenosyl-L-methionine site. Catalysis depends on residues E257 and E266. An S-adenosyl-L-methionine-binding site is contributed by S271. The tract at residues 494-517 is disordered; sequence VAQEPPLQPQPELSTQQDIQTPND. Residues 507–516 show a composition bias toward polar residues; sequence STQQDIQTPN.

This sequence belongs to the class I-like SAM-binding methyltransferase superfamily. Protein arginine N-methyltransferase family. As to quaternary structure, interacts with PQT3 in the nucleus. Post-translationally, ubiquitinated by PQT3.

The protein resides in the nucleus. It localises to the cytoplasm. It catalyses the reaction L-arginyl-[protein] + 2 S-adenosyl-L-methionine = N(omega),N(omega)-dimethyl-L-arginyl-[protein] + 2 S-adenosyl-L-homocysteine + 2 H(+). Its function is as follows. Methylates (mono- and asymmetric dimethylation) the guanidino nitrogens of arginyl residues in several proteins involved in DNA packaging, transcription regulation, and mRNA stability. Recruited to promoters upon gene activation, methylates histone H3 and activates transcription via chromatin remodeling. Positive regulator in the oxidative stress tolerance that promotes the expression of enzymes preventing oxidative stress such as APX1 and GPX1 by histone methylation (H3R17me2a). Confers tolerance to cadmium CdCl(2) and salt NaCl stresses. The protein is Probable histone-arginine methyltransferase 1.3 (PRMT13) of Arabidopsis thaliana (Mouse-ear cress).